Here is a 282-residue protein sequence, read N- to C-terminus: Large ribosomal subunit protein uL2 (282 aa).

2 disordered regions span residues 31 to 55 (KRLTKPVRKSGGRNAHGKVTTRHIG) and 223 to 282 (LAMN…NTQR). 2 stretches are compositionally biased toward basic residues: residues 34 to 55 (TKPVRKSGGRNAHGKVTTRHIG) and 270 to 282 (VTRRRPGVRNTQR).

The protein belongs to the universal ribosomal protein uL2 family. Part of the 50S ribosomal subunit. Forms a bridge to the 30S subunit in the 70S ribosome.

Functionally, one of the primary rRNA binding proteins. Required for association of the 30S and 50S subunits to form the 70S ribosome, for tRNA binding and peptide bond formation. It has been suggested to have peptidyltransferase activity; this is somewhat controversial. Makes several contacts with the 16S rRNA in the 70S ribosome. This Anaeromyxobacter dehalogenans (strain 2CP-C) protein is Large ribosomal subunit protein uL2.